Consider the following 293-residue polypeptide: Small ribosomal subunit biogenesis GTPase RsgA (293 aa).

The 161-residue stretch at 63 to 223 folds into the CP-type G domain; the sequence is QNELVRPPIA…VADTPGFSAL (161 aa). Residues 112 to 115 and 166 to 174 each bind GTP; these read SKID and GQSGVGKSS. The Zn(2+) site is built by cysteine 247, cysteine 252, histidine 254, and cysteine 260.

The protein belongs to the TRAFAC class YlqF/YawG GTPase family. RsgA subfamily. Monomer. Associates with 30S ribosomal subunit, binds 16S rRNA. It depends on Zn(2+) as a cofactor.

The protein resides in the cytoplasm. Functionally, one of several proteins that assist in the late maturation steps of the functional core of the 30S ribosomal subunit. Helps release RbfA from mature subunits. May play a role in the assembly of ribosomal proteins into the subunit. Circularly permuted GTPase that catalyzes slow GTP hydrolysis, GTPase activity is stimulated by the 30S ribosomal subunit. This is Small ribosomal subunit biogenesis GTPase RsgA from Geobacillus kaustophilus (strain HTA426).